Reading from the N-terminus, the 1103-residue chain is Isoleucine--tRNA ligase (1103 aa).

The short motif at 53–63 (PFANGLPHYGH) is the 'HIGH' region element. The short motif at 628–632 (KLSKR) is the 'KMSKS' region element. K631 provides a ligand contact to ATP.

It belongs to the class-I aminoacyl-tRNA synthetase family. IleS type 2 subfamily. In terms of assembly, monomer. It depends on Zn(2+) as a cofactor.

The protein localises to the cytoplasm. The catalysed reaction is tRNA(Ile) + L-isoleucine + ATP = L-isoleucyl-tRNA(Ile) + AMP + diphosphate. In terms of biological role, catalyzes the attachment of isoleucine to tRNA(Ile). As IleRS can inadvertently accommodate and process structurally similar amino acids such as valine, to avoid such errors it has two additional distinct tRNA(Ile)-dependent editing activities. One activity is designated as 'pretransfer' editing and involves the hydrolysis of activated Val-AMP. The other activity is designated 'posttransfer' editing and involves deacylation of mischarged Val-tRNA(Ile). This chain is Isoleucine--tRNA ligase, found in Rickettsia akari (strain Hartford).